A 161-amino-acid polypeptide reads, in one-letter code: C-type lectin lectoxin-Lio3 (161 aa).

The signal sequence occupies residues 1–23; the sequence is MRRFIFMSLGLLVLAFSLSGIGA. Disulfide bonds link Cys27-Cys38, Cys55-Cys154, and Cys129-Cys146. The region spanning 34 to 155 is the C-type lectin domain; the sequence is HNISCYKLFT…CGLLHYFICQ (122 aa). The N-linked (GlcNAc...) asparagine glycan is linked to Asn35. The Mannose-binding signature appears at 117 to 119; sequence KGE. Positions 127, 142, and 143 each coordinate Ca(2+).

The protein belongs to the true venom lectin family. As to expression, expressed by the venom gland.

Its subcellular location is the secreted. Functionally, mannose-binding lectin which recognizes specific carbohydrate structures and agglutinates a variety of animal cells by binding to cell-surface glycoproteins and glycolipids. May be a calcium-dependent lectin. This is C-type lectin lectoxin-Lio3 from Erythrolamprus poecilogyrus (Water snake).